The following is a 197-amino-acid chain: Baseplate puncturing device gp45 (197 aa).

The disordered stretch occupies residues D172–Q197. Basic and acidic residues predominate over residues S179–D188. Fe cation-binding residues include H183 and H185. Residues D188 and S189 each contribute to the Ca(2+) site. Chloride is bound at residue D188.

Homotrimer. Part of a complex composed of three DNA circularization protein N, three baseplate hub protein gp44 and three sub-complex wedge (made of two copies of each baseplate protein gp46, gp47 and gp48) that forms the baseplate. Requires Ca(2+) as cofactor. Chloride serves as cofactor. It depends on Fe cation as a cofactor.

The protein localises to the virion. The protein resides in the host cytoplasm. Component of the baseplate that forms a central needlelike spike used to puncture the host cell membrane for tube insertion during virus entry. Probably involved in baseplate and tail assembly. Serves as the distal plug of tail tube channel and might regulate the process of the phage DNA and protein ejection into the host cell. This Escherichia phage Mu (Bacteriophage Mu) protein is Baseplate puncturing device gp45.